The primary structure comprises 406 residues: 2,3-bisphosphoglycerate-independent phosphoglycerate mutase (406 aa).

It belongs to the BPG-independent phosphoglycerate mutase family. A-PGAM subfamily.

The enzyme catalyses (2R)-2-phosphoglycerate = (2R)-3-phosphoglycerate. The protein operates within carbohydrate degradation; glycolysis; pyruvate from D-glyceraldehyde 3-phosphate: step 3/5. Catalyzes the interconversion of 2-phosphoglycerate and 3-phosphoglycerate. In Methanococcus vannielii (strain ATCC 35089 / DSM 1224 / JCM 13029 / OCM 148 / SB), this protein is 2,3-bisphosphoglycerate-independent phosphoglycerate mutase.